A 196-amino-acid chain; its full sequence is UMP-CMP kinase (196 aa).

Position 13–18 (13–18 (GAGKGT)) interacts with ATP. A Phosphoserine modification is found at S33. Residues 33-63 (SAGELLRDERKNPDSQYGELIEKYIKEGKIV) form an NMP region. An a ribonucleoside 5'-phosphate-binding site is contributed by R39. N6-acetyllysine occurs at positions 43 and 55. 61 to 63 (KIV) is a binding site for a ribonucleoside 5'-phosphate. K73 is covalently cross-linked (Glycyl lysine isopeptide (Lys-Gly) (interchain with G-Cter in SUMO2)). 93-96 (GFPR) is a binding site for a ribonucleoside 5'-phosphate. N100 contacts CMP. At K106 the chain carries N6-succinyllysine. An LID region spans residues 133-143 (ERGKSSGRSDD). Position 134 (R134) interacts with ATP. R140 and R151 together coordinate a ribonucleoside 5'-phosphate. K179 lines the ATP pocket. At S180 the chain carries Phosphoserine.

This sequence belongs to the adenylate kinase family. UMP-CMP kinase subfamily. In terms of assembly, monomer. Mg(2+) is required as a cofactor.

The protein localises to the nucleus. It is found in the cytoplasm. It carries out the reaction CMP + ATP = CDP + ADP. It catalyses the reaction dCMP + ATP = dCDP + ADP. The enzyme catalyses UMP + ATP = UDP + ADP. The catalysed reaction is a 2'-deoxyribonucleoside 5'-diphosphate + ATP = a 2'-deoxyribonucleoside 5'-triphosphate + ADP. It carries out the reaction a ribonucleoside 5'-diphosphate + ATP = a ribonucleoside 5'-triphosphate + ADP. Its function is as follows. Catalyzes the phosphorylation of pyrimidine nucleoside monophosphates at the expense of ATP. Plays an important role in de novo pyrimidine nucleotide biosynthesis. Has preference for UMP and CMP as phosphate acceptors. Also displays broad nucleoside diphosphate kinase activity. The polypeptide is UMP-CMP kinase (Cmpk1) (Mus musculus (Mouse)).